The sequence spans 161 residues: Cell cycle link protein (161 aa).

Residues 9–21 form a binding to host SKP1 protein region; that stretch reads MPDDVKREIKEIY. The LXCXE motif, interaction with host RBR motif lies at 111 to 115; sequence LYCDE.

As to quaternary structure, interacts with host SKP1. Interacts (via LXCXE domain) with host retinoblastoma-related protein 2 (RBR2). Interacts (via LXCXE domain) with human RB1. Interacts (via LXCXE domain) with retinoblastoma-related proteins (RBR).

In terms of biological role, interacts with and disrupts the function of host retinoblastoma-related proteins RBR, which are key regulators of the cell cycle. Induces transcriptional activation of E2F-regulated S-phase and G2/M-phase-specific genes. Inactivation of the ability of RBR to arrest the cell cycle leads to the stimulation of viral DNA replication. Acts as a suppressor of RNA-mediated gene silencing, also known as post-transcriptional gene silencing (PTGS), a mechanism of plant viral defense that limits the accumulation of viral RNAs. The polypeptide is Cell cycle link protein (DNA-C) (Musa (BBTV)).